A 95-amino-acid chain; its full sequence is Aspartyl/glutamyl-tRNA(Asn/Gln) amidotransferase subunit C (95 aa).

This sequence belongs to the GatC family. Heterotrimer of A, B and C subunits.

It carries out the reaction L-glutamyl-tRNA(Gln) + L-glutamine + ATP + H2O = L-glutaminyl-tRNA(Gln) + L-glutamate + ADP + phosphate + H(+). The catalysed reaction is L-aspartyl-tRNA(Asn) + L-glutamine + ATP + H2O = L-asparaginyl-tRNA(Asn) + L-glutamate + ADP + phosphate + 2 H(+). In terms of biological role, allows the formation of correctly charged Asn-tRNA(Asn) or Gln-tRNA(Gln) through the transamidation of misacylated Asp-tRNA(Asn) or Glu-tRNA(Gln) in organisms which lack either or both of asparaginyl-tRNA or glutaminyl-tRNA synthetases. The reaction takes place in the presence of glutamine and ATP through an activated phospho-Asp-tRNA(Asn) or phospho-Glu-tRNA(Gln). This chain is Aspartyl/glutamyl-tRNA(Asn/Gln) amidotransferase subunit C, found in Acidithiobacillus ferrooxidans (strain ATCC 23270 / DSM 14882 / CIP 104768 / NCIMB 8455) (Ferrobacillus ferrooxidans (strain ATCC 23270)).